A 212-amino-acid polypeptide reads, in one-letter code: ER lumen protein-retaining receptor 2 (212 aa).

The Lumenal segment spans residues 1–4 (MNVF). The chain crosses the membrane as a helical span at residues 5–24 (RLSGDLSHLAAIIILLLKIW). Over 25-32 (KSRSCAGI) the chain is Cytoplasmic. A helical membrane pass occupies residues 33-52 (SGKSQLLFALVFTTRYLDLL). Positions 47–48 (RY) are interaction with the K-D-E-L motif on target proteins. At 53–58 (TSFISL) the chain is on the lumenal side. Residues 59–79 (YNTSMKVIYIGCAYATVYLIY) traverse the membrane as a helical segment. The Cytoplasmic portion of the chain corresponds to 80–92 (MKFKATYDGNHDT). The helical transmembrane segment at 93-110 (FRVEFLVVPVGGLSVLVN) threads the bilayer. The Lumenal portion of the chain corresponds to 111-116 (HDFSPL). A helical membrane pass occupies residues 117–135 (EILWTFSIYLESVAILPQL). Residues 136–149 (FMISKTGEAETITT) are Cytoplasmic-facing. The chain crosses the membrane as a helical span at residues 150–168 (HYLFFLGLYRALYLFNWIW). An interaction with the K-D-E-L motif on target proteins region spans residues 159-169 (RALYLFNWIWR). Over 169–178 (RYSFEGFFDL) the chain is Lumenal. The helical transmembrane segment at 179-199 (IAIVAGVVQTILYCDFFYLYV) threads the bilayer. The Cytoplasmic portion of the chain corresponds to 200-212 (TKVLKGKKLSLPA). The tract at residues 204 to 207 (KGKK) is important for recycling of cargo proteins with the sequence motif K-D-E-L from the Golgi to the endoplasmic reticulum.

The protein belongs to the ERD2 family.

It is found in the endoplasmic reticulum membrane. It localises to the golgi apparatus membrane. The protein resides in the cytoplasmic vesicle. The protein localises to the COPI-coated vesicle membrane. In terms of biological role, receptor for the C-terminal sequence motif K-D-E-L that is present on endoplasmic reticulum resident proteins and that mediates their recycling from the Golgi back to the endoplasmic reticulum. Binding is pH dependent, and is optimal at pH 5-5.4. This is ER lumen protein-retaining receptor 2 (kdelr2) from Xenopus tropicalis (Western clawed frog).